Consider the following 319-residue polypeptide: Biotin synthase (319 aa).

A Radical SAM core domain is found at 44 to 273 (IHGDGIDLCS…EAKIRLAGGR (230 aa)). Residues cysteine 62, cysteine 66, and cysteine 69 each contribute to the [4Fe-4S] cluster site. Residues serine 106, cysteine 138, cysteine 198, and arginine 268 each coordinate [2Fe-2S] cluster.

Belongs to the radical SAM superfamily. Biotin synthase family. In terms of assembly, homodimer. [4Fe-4S] cluster is required as a cofactor. [2Fe-2S] cluster serves as cofactor.

The enzyme catalyses (4R,5S)-dethiobiotin + (sulfur carrier)-SH + 2 reduced [2Fe-2S]-[ferredoxin] + 2 S-adenosyl-L-methionine = (sulfur carrier)-H + biotin + 2 5'-deoxyadenosine + 2 L-methionine + 2 oxidized [2Fe-2S]-[ferredoxin]. The protein operates within cofactor biosynthesis; biotin biosynthesis; biotin from 7,8-diaminononanoate: step 2/2. In terms of biological role, catalyzes the conversion of dethiobiotin (DTB) to biotin by the insertion of a sulfur atom into dethiobiotin via a radical-based mechanism. The sequence is that of Biotin synthase from Clostridium perfringens (strain ATCC 13124 / DSM 756 / JCM 1290 / NCIMB 6125 / NCTC 8237 / Type A).